We begin with the raw amino-acid sequence, 148 residues long: Small ribosomal subunit protein eS19 (148 aa).

Residues 79–90 (HGSTKNRGSRPA) show a composition bias toward basic residues. 2 disordered regions span residues 79 to 98 (HGST…ASGA) and 116 to 148 (DEEK…EDDE). Basic and acidic residues predominate over residues 130-140 (RDLDRIAKTTV).

Belongs to the eukaryotic ribosomal protein eS19 family.

The sequence is that of Small ribosomal subunit protein eS19 (rps19) from Emericella nidulans (strain FGSC A4 / ATCC 38163 / CBS 112.46 / NRRL 194 / M139) (Aspergillus nidulans).